Consider the following 417-residue polypeptide: Serpin H1 (417 aa).

The N-terminal stretch at 1 to 17 (MRSLLLGTLCLLAVALA) is a signal peptide. N6-succinyllysine is present on K93. 2 N-linked (GlcNAc...) asparagine glycosylation sites follow: N119 and N124. S140 is modified (phosphoserine). K206 carries the post-translational modification N6-acetyllysine. At K295 the chain carries N6-succinyllysine. K318 carries the N6-acetyllysine modification. A glycan (N-linked (GlcNAc...) asparagine) is linked at N394. Residues 414 to 417 (RDEL) carry the Prevents secretion from ER motif.

It belongs to the serpin family.

The protein localises to the endoplasmic reticulum lumen. Its function is as follows. Binds specifically to collagen. Could be involved as a chaperone in the biosynthetic pathway of collagen. This chain is Serpin H1 (Serpinh1), found in Rattus norvegicus (Rat).